Here is a 519-residue protein sequence, read N- to C-terminus: Putative thymidine phosphorylase (519 aa).

This sequence belongs to the thymidine/pyrimidine-nucleoside phosphorylase family. Type 2 subfamily.

The catalysed reaction is thymidine + phosphate = 2-deoxy-alpha-D-ribose 1-phosphate + thymine. The protein is Putative thymidine phosphorylase of Maricaulis maris (strain MCS10) (Caulobacter maris).